Reading from the N-terminus, the 146-residue chain is SecB-like chaperone SmegB (146 aa).

It belongs to the SecB-like family.

Its function is as follows. Chaperone component of an orphan antitoxin chaperone (AC) system; there is no toxin gene in close genomic proximity. When expressed in E.coli complements the cold-sensitive phenotype of a secB deletion, suggesting it may have a generic chaperone function. Does not however complement the toxin-neutralizing effect of its M.tuberculosis paralog Rv1957 (AC P95257) in E.coli, probably because the antitoxin genes are not from the same family. The chain is SecB-like chaperone SmegB from Mycolicibacterium smegmatis (strain ATCC 700084 / mc(2)155) (Mycobacterium smegmatis).